Reading from the N-terminus, the 510-residue chain is Hepatic triacylglycerol lipase (510 aa).

The first 21 residues, 1–21 (MGNPLQISIFLVFCIFIQSSA), serve as a signal peptide directing secretion. Asparagine 79 carries an N-linked (GlcNAc...) asparagine glycan. The Nucleophile role is filled by serine 169. Residue aspartate 195 is the Charge relay system of the active site. The essential for determining substrate specificity stretch occupies residues 255–278 (CHFLELYKHIAEHGLNAITQTIKC). The active-site Charge relay system is the histidine 280. Residues 353-487 (YHYQFKIQFI…HPSQEKVFVN (135 aa)) enclose the PLAT domain. N-linked (GlcNAc...) asparagine glycosylation occurs at asparagine 398.

Belongs to the AB hydrolase superfamily. Lipase family. In terms of assembly, homodimer.

Its subcellular location is the secreted. It catalyses the reaction a triacylglycerol + H2O = a diacylglycerol + a fatty acid + H(+). The catalysed reaction is a 1-acyl-sn-glycero-3-phosphocholine + H2O = sn-glycerol 3-phosphocholine + a fatty acid + H(+). It carries out the reaction a 1,2-diacyl-sn-glycero-3-phosphocholine + H2O = a 2-acyl-sn-glycero-3-phosphocholine + a fatty acid + H(+). The enzyme catalyses 1,2,3-tri-(9Z-octadecenoyl)-glycerol + H2O = di-(9Z)-octadecenoylglycerol + (9Z)-octadecenoate + H(+). It catalyses the reaction 1,2-di-(9Z-octadecenoyl)-sn-glycero-3-phosphocholine + H2O = (9Z-octadecenoyl)-sn-glycero-3-phosphocholine + (9Z)-octadecenoate + H(+). The catalysed reaction is 1,2,3-tributanoylglycerol + H2O = dibutanoylglycerol + butanoate + H(+). It carries out the reaction 1,2-dihexadecanoyl-sn-glycero-3-phosphocholine + H2O = hexadecanoyl-sn-glycero-3-phosphocholine + hexadecanoate + H(+). The enzyme catalyses 1,2-di-(9Z-octadecenoyl)-sn-glycerol + H2O = 2-(9Z-octadecenoyl)-glycerol + (9Z)-octadecenoate + H(+). It catalyses the reaction 1,2,3-tri-(9Z-octadecenoyl)-glycerol + H2O = 2,3-di-(9Z)-octadecenoyl-sn-glycerol + (9Z)-octadecenoate + H(+). The catalysed reaction is 1-(9Z-octadecenoyl)-sn-glycero-3-phospho-L-serine + H2O = sn-glycero-3-phospho-L-serine + (9Z)-octadecenoate + H(+). It carries out the reaction 1-hexadecanoyl-sn-glycero-3-phosphocholine + H2O = sn-glycerol 3-phosphocholine + hexadecanoate + H(+). The enzyme catalyses 1,3-di-(9Z-octadecenoyl)-glycerol + H2O = 3-(9Z-octadecenoyl)-sn-glycerol + (9Z)-octadecenoate + H(+). In terms of biological role, catalyzes the hydrolysis of triglycerides and phospholipids present in circulating plasma lipoproteins, including chylomicrons, intermediate density lipoproteins (IDL), low density lipoproteins (LDL) of large size and high density lipoproteins (HDL), releasing free fatty acids (FFA) and smaller lipoprotein particles. Also exhibits lysophospholipase activity. Can hydrolyze both neutral lipid and phospholipid substrates but shows a greater binding affinity for neutral lipid substrates than phospholipid substrates. In native LDL, preferentially hydrolyzes the phosphatidylcholine species containing polyunsaturated fatty acids at sn-2 position. The sequence is that of Hepatic triacylglycerol lipase (Lipc) from Mus musculus (Mouse).